The primary structure comprises 305 residues: Ribonuclease BN (305 aa).

Zn(2+)-binding residues include histidine 64, histidine 66, aspartate 68, histidine 69, histidine 141, aspartate 212, and histidine 270. Catalysis depends on aspartate 68, which acts as the Proton acceptor.

It belongs to the RNase Z family. RNase BN subfamily. Homodimer. The cofactor is Zn(2+).

Its function is as follows. Zinc phosphodiesterase, which has both exoribonuclease and endoribonuclease activities. This is Ribonuclease BN from Escherichia coli O139:H28 (strain E24377A / ETEC).